The chain runs to 1561 residues: Adhesion G protein-coupled receptor B2 (1561 aa).

A signal peptide spans 1–20; the sequence is MTPACPLLLSVILSLRLATA. The Extracellular segment spans residues 21–930; that stretch reads FDPAPSACSA…ELAGAPSVPL (910 aa). 3 N-linked (GlcNAc...) asparagine glycosylation sites follow: Asn94, Asn182, and Asn183. Residue Ser257 is glycosylated (O-linked (Xyl...) (chondroitin sulfate) serine). TSP type-1 domains follow at residues 300–353, 355–408, 410–463, and 466–519; these read DPAA…ATCP, HGVW…AACP, EGQW…LDCP, and DGKW…KRCP. Intrachain disulfides connect Cys312-Cys346, Cys316-Cys352, Cys327-Cys336, Cys367-Cys402, Cys371-Cys407, Cys382-Cys392, Cys422-Cys457, Cys426-Cys462, Cys437-Cys447, Cys478-Cys513, Cys482-Cys518, Cys493-Cys503, Cys525-Cys560, and Cys548-Cys578. Asn347 carries an N-linked (GlcNAc...) asparagine glycan. Asn428 carries N-linked (GlcNAc...) asparagine glycosylation. N-linked (GlcNAc...) asparagine glycans are attached at residues Asn551 and Asn636. One can recognise a GAIN-B domain in the interval 748–918; it reads DRLFLPKEVL…AVLAQPPKDL (171 aa). The tract at residues 757–797 is disordered; the sequence is LSLSSPGKPATPGAATAGSPGRGRGPGTVPPGPGHAHQRLL. Over residues 760–775 the composition is skewed to low complexity; it reads SSPGKPATPGAATAGS. An N-linked (GlcNAc...) asparagine glycan is attached at Asn861. Disulfide bonds link Cys868-Cys900 and Cys888-Cys902. The tract at residues 868-918 is GPS; the sequence is CASWDYSRADTNSGDWNTESCQTLETQAAHTRCQCQHLSTFAVLAQPPKDL. Residues 931-951 form a helical membrane-spanning segment; sequence VIGCAVSCMALLTLLAIYAAF. Topologically, residues 952 to 959 are cytoplasmic; that stretch reads WRFIKSER. The chain crosses the membrane as a helical span at residues 960–980; sequence SIILLNFCLSILASNILILVG. At 981–988 the chain is on the extracellular side; the sequence is QSRVLSKG. A helical membrane pass occupies residues 989 to 1009; it reads VCTMTAAFLHFFFLSSFCWVL. Residues 1010 to 1030 lie on the Cytoplasmic side of the membrane; the sequence is TEAWQSYLAVIGRMRTRLVRK. The helical transmembrane segment at 1031 to 1051 threads the bilayer; the sequence is RFLCLGWGLPALVVAVSVGFT. Over 1052-1072 the chain is Extracellular; the sequence is RTKGYGTSSYCWLSLEGGLLY. The chain crosses the membrane as a helical span at residues 1073–1093; it reads AFVGPAAVIVLVNMLIGIIVF. At 1094–1115 the chain is on the cytoplasmic side; it reads NKLMARDGVSDKSKKQRAGSER. Residues 1116–1136 form a helical membrane-spanning segment; the sequence is CPWASLLLPCSACGAVPSPLL. The Extracellular segment spans residues 1137–1147; sequence SSASARNAMAS. Residues 1148-1168 traverse the membrane as a helical segment; sequence LWSSCVVLPLLALTWMSAVLA. The Cytoplasmic segment spans residues 1169 to 1561; that stretch reads MTDRRSVLFQ…PPDGDFQTEV (393 aa). The residue at position 1345 (Tyr1345) is a Phosphotyrosine. Disordered stretches follow at residues 1355 to 1377, 1417 to 1447, and 1491 to 1561; these read LQPGGGGTAGEEAPRARPEGTPR, FQPPPPTPSARQVPEPGERSRTMPRTVPGST, and RYRS…QTEV. Residues 1366-1376 are compositionally biased toward basic and acidic residues; that stretch reads EAPRARPEGTP. The segment covering 1491–1502 has biased composition (basic and acidic residues); sequence RYRSQSSAKEKP. Residues 1519–1528 are compositionally biased toward polar residues; sequence SWSTFKSMTL. The span at 1551–1561 shows a compositional bias: acidic residues; the sequence is EPPDGDFQTEV.

Belongs to the G-protein coupled receptor 2 family. Adhesion G-protein coupled receptor (ADGR) subfamily. As to quaternary structure, heterodimer of 2 chains generated by proteolytic processing; the large extracellular N-terminal fragment and the membrane-bound C-terminal fragment predominantly remain associated and non-covalently linked. Interacts with GABPB2. Interacts (via carboxy-terminus) with TAX1BP3. Interacts with GNAZ. Interacts with SH3GL2. In terms of processing, glycosylated. Post-translationally, autoproteolytically processed at the GPS region of the GAIN-B domain; this cleavage modulates receptor activity. Additionally, furin is involved in the cleavage at another site, in the middle of the extracellular domain, generating a soluble fragment. Specifically expressed in the brain. The peak level in the brain is observed 10 days after birth.

Its subcellular location is the cell membrane. The protein resides in the secreted. Its activity is regulated as follows. Receptor activity is regulated by proteolytic processing. The long N-terminal has a an inhibitory effect on the constitutive signaling activity. Removal of the N-terminal region induces an increase of the receptor activity. In terms of biological role, orphan G-protein coupled receptor involved in cell adhesion and probably in cell-cell interactions. Activates NFAT-signaling pathway, a transcription factor, via the G-protein GNAZ. Involved in angiogenesis inhibition. This Mus musculus (Mouse) protein is Adhesion G protein-coupled receptor B2 (Adgrb2).